A 368-amino-acid chain; its full sequence is Aminomethyltransferase (368 aa).

Belongs to the GcvT family. In terms of assembly, the glycine cleavage system is composed of four proteins: P, T, L and H.

The enzyme catalyses N(6)-[(R)-S(8)-aminomethyldihydrolipoyl]-L-lysyl-[protein] + (6S)-5,6,7,8-tetrahydrofolate = N(6)-[(R)-dihydrolipoyl]-L-lysyl-[protein] + (6R)-5,10-methylene-5,6,7,8-tetrahydrofolate + NH4(+). Its function is as follows. The glycine cleavage system catalyzes the degradation of glycine. The chain is Aminomethyltransferase from Xylella fastidiosa (strain M23).